The following is a 695-amino-acid chain: Potassium voltage-gated channel subfamily KQT member 4 (695 aa).

Residues 1-21 (MAEAPPRRLGLGPPPGDAPRA) form a disordered region. Over 1 to 96 (MAEAPPRRLG…VYNVLERPRG (96 aa)) the chain is Cytoplasmic. An a 1,2-diacyl-sn-glycero-3-phospho-(1D-myo-inositol-4,5-bisphosphate)-binding site is contributed by Arg-93. The chain crosses the membrane as a helical span at residues 97 to 118 (WAFVYHVFIFLLVFSCLVLSVL). Residues 119–129 (STIQEHQELAN) are Extracellular-facing. The chain crosses the membrane as a helical span at residues 130 to 152 (ECLLILEFVMIVVFGLEYIVRVW). At 153–168 (SAGCCCRYRGWQGRFR) the chain is on the cytoplasmic side. The helical transmembrane segment at 169-191 (FARKPFCVIDFIVFVASVAVIAA) threads the bilayer. Lys-172 contributes to the a 1,2-diacyl-sn-glycero-3-phospho-(1D-myo-inositol-4,5-bisphosphate) binding site. The Extracellular portion of the chain corresponds to 192 to 202 (GTQGNIFATSA). A helical; Voltage-sensor transmembrane segment spans residues 203–223 (LRSMRFLQILRMVRMDRRGGT). 4 residues coordinate a 1,2-diacyl-sn-glycero-3-phospho-(1D-myo-inositol-4,5-bisphosphate): Arg-219, Arg-220, Lys-225, and Ser-235. Topologically, residues 224–235 (WKLLGSVVYAHS) are cytoplasmic. A helical membrane pass occupies residues 236–258 (KELITAWYIGFLVLIFASFLVYL). The Extracellular segment spans residues 259–270 (AEKDANSDFSSY). The segment at residues 271-292 (ADSLWWGTITLTTIGYGDKTPH) is an intramembrane region (pore-forming). Position 293 (Thr-293) is a topological domain, extracellular. The helical transmembrane segment at 294–322 (WLGRVLAAGFALLGISFFALPAGILGSGF) threads the bilayer. Topologically, residues 323–695 (ALKVQEQHRQ…ISRSVSTNMD (373 aa)) are cytoplasmic. Residues His-330 and Lys-333 each contribute to the a 1,2-diacyl-sn-glycero-3-phospho-(1D-myo-inositol-4,5-bisphosphate) site. An interaction with CALM region spans residues 342 to 351 (AANLIQAAWR). Disordered regions lie at residues 400-480 (RRAP…TKVQ) and 496-515 (RLKP…AEEK). Polar residues-rich tracts occupy residues 443–452 (GSSQRRTGPS) and 463–480 (TSPS…TKVQ). The interaction with CALM stretch occupies residues 535-549 (RSIRILKFLVAKRKF). The C-terminal assembly domain (tetramerization) stretch occupies residues 546 to 650 (KRKFKETLRP…SRCLRSGTSA (105 aa)). Residues 587 to 606 (VGRGPGDRKAREKGDKGPSD) form a disordered region. Basic and acidic residues predominate over residues 591–605 (PGDRKAREKGDKGPS). Residues 615–636 (MMGRVVKVEKQVQSIEHKLDLL) adopt a coiled-coil conformation.

The protein belongs to the potassium channel family. KQT (TC 1.A.1.15) subfamily. Kv7.4/KCNQ4 sub-subfamily. In terms of assembly, homotetramer. Interacts (via C-terminus) with calmodulin; forms a heterooctameric structure (with 4:4 KCNQ1:CALM stoichiometry); the interaction is calcium-independent, constitutive, participates in the proper assembly of a functional channel. The interaction with calcium-free CALM controls channel trafficking whereas interaction with calcium-bound CALM regulates channel gating. May form a functional heteromultimeric channel with KCNQ3. Interacts with HSP90AB1; promotes cell surface expression of KCNQ4. Expressed in the outer, but not the inner, sensory hair cells of the cochlea. Slightly expressed in heart, brain and skeletal muscle.

Its subcellular location is the basal cell membrane. It carries out the reaction K(+)(in) = K(+)(out). Two molecules of phosphatidylinositol-4,5-bisphosphate (PIP2-I and PIP2-II) are essential to activate KCNQ4 channel by inducing the coupling of the voltage-sensing domain (VSD) and the pore-forming domain (PD). Upon channel activation, PIP2-I and PIP2-II disrupt the VSD-calmodulin/CALM interaction, causing the release of CALM from the VSD which triggers the opening of the gate. Calcium suppresses KCNQ4 channel current through calcium-bound CALM C-terminus. Therefore CALM acts as calcium sensor that controls channel activity. ML213 potentiates KCNQ4 channel. KCNQ4 channel is blocked by linopirdin, XE991 and bepridil, whereas clofilium is without significant effect. Muscarinic agonist oxotremorine-M strongly suppress KCNQ4 current in CHO cells in which cloned KCNQ4 channels were coexpressed with M1 muscarinic receptors. In terms of biological role, pore-forming subunit of the voltage-gated potassium (Kv) channel involved in the regulation of sensory cells excitability in the cochlea. KCNQ4/Kv7.4 channel is composed of 4 pore-forming subunits assembled as tetramers. Promotes the outflow of potassium ions in the repolarization phase of action potential which plays a role in regulating membrane potential of excitable cells. The channel conducts a slowly activating and deactivating current. Current often shows some inward rectification at positive potentials. Channel may be selectively permeable in vitro to other cations besides potassium, in decreasing order of affinity K(+) = Rb(+) &gt; Cs(+) &gt; Na(+). Important for normal physiological function of inner ear such as sensory perception of sound. The polypeptide is Potassium voltage-gated channel subfamily KQT member 4 (Homo sapiens (Human)).